Consider the following 227-residue polypeptide: Ribonuclease 3 (227 aa).

In terms of domain architecture, RNase III spans 4–133 (FEKLEKLLSY…LIAAIYLDSN (130 aa)). Glutamate 46 serves as a coordination point for Mg(2+). The active site involves aspartate 50. Mg(2+) is bound by residues asparagine 119 and glutamate 122. Glutamate 122 is a catalytic residue. The DRBM domain maps to 158-226 (DPKTALQEWA…ARSLLHRLKN (69 aa)).

This sequence belongs to the ribonuclease III family. As to quaternary structure, homodimer. Mg(2+) serves as cofactor.

It is found in the cytoplasm. The catalysed reaction is Endonucleolytic cleavage to 5'-phosphomonoester.. Its function is as follows. Digests double-stranded RNA. Involved in the processing of primary rRNA transcript to yield the immediate precursors to the large and small rRNAs (23S and 16S). Processes some mRNAs, and tRNAs when they are encoded in the rRNA operon. Processes pre-crRNA and tracrRNA of type II CRISPR loci if present in the organism. The chain is Ribonuclease 3 from Rickettsia africae (strain ESF-5).